The sequence spans 94 residues: Co-chaperonin GroES (94 aa).

This sequence belongs to the GroES chaperonin family. Heptamer of 7 subunits arranged in a ring. Interacts with the chaperonin GroEL.

The protein resides in the cytoplasm. In terms of biological role, together with the chaperonin GroEL, plays an essential role in assisting protein folding. The GroEL-GroES system forms a nano-cage that allows encapsulation of the non-native substrate proteins and provides a physical environment optimized to promote and accelerate protein folding. GroES binds to the apical surface of the GroEL ring, thereby capping the opening of the GroEL channel. The sequence is that of Co-chaperonin GroES from Staphylococcus aureus (strain Mu50 / ATCC 700699).